A 122-amino-acid chain; its full sequence is Large ribosomal subunit protein uL18 (122 aa).

This sequence belongs to the universal ribosomal protein uL18 family. Part of the 50S ribosomal subunit; part of the 5S rRNA/L5/L18/L25 subcomplex. Contacts the 5S and 23S rRNAs.

Its function is as follows. This is one of the proteins that bind and probably mediate the attachment of the 5S RNA into the large ribosomal subunit, where it forms part of the central protuberance. The sequence is that of Large ribosomal subunit protein uL18 from Petrotoga mobilis (strain DSM 10674 / SJ95).